A 490-amino-acid chain; its full sequence is POC1 centriolar protein homolog B (490 aa).

WD repeat units lie at residues 16 to 55 (GHKD…RAFR), 58 to 97 (GHTD…ESTV), 100 to 139 (AHTA…FLYS), 142 to 181 (RHTN…CINI), 184 to 223 (DYGG…LIQH), 226 to 265 (VHNA…LIYT), and 268 to 307 (GHKG…LNYR). Positions 375–388 (DGASSSRAQFTSGM) are enriched in polar residues. Residues 375 to 427 (DGASSSRAQFTSGMDSGPFRTHTQAREEEDENQEERFAGGMTASPAERSGIPS) form a disordered region. Residues 431-463 (STLENIVQQLDILTQTVAVLEERLTLTEDKLRT) adopt a coiled-coil conformation.

The protein belongs to the WD repeat POC1 family.

Its subcellular location is the cytoplasm. The protein localises to the cytoskeleton. It localises to the microtubule organizing center. The protein resides in the centrosome. It is found in the centriole. Its function is as follows. Plays an important role in centriole assembly and/or stability and ciliogenesis. Involved in early steps of centriole duplication, as well as in the later steps of centriole length control. In Danio rerio (Zebrafish), this protein is POC1 centriolar protein homolog B.